The primary structure comprises 229 residues: General odorant-binding protein 69 (229 aa).

Positions Met1–Gly20 are cleaved as a signal peptide. Cys66 and Cys106 form a disulfide bridge.

This sequence belongs to the PBP/GOBP family.

The protein localises to the secreted. Functionally, present in the aqueous fluid surrounding olfactory sensory dendrites and are thought to aid in the capture and transport of hydrophobic odorants into and through this fluid. The chain is General odorant-binding protein 69 (Obp69) from Anopheles gambiae (African malaria mosquito).